Consider the following 409-residue polypeptide: Tryptophan synthase beta chain (409 aa).

Lys95 bears the N6-(pyridoxal phosphate)lysine mark.

The protein belongs to the TrpB family. In terms of assembly, tetramer of two alpha and two beta chains. It depends on pyridoxal 5'-phosphate as a cofactor.

The enzyme catalyses (1S,2R)-1-C-(indol-3-yl)glycerol 3-phosphate + L-serine = D-glyceraldehyde 3-phosphate + L-tryptophan + H2O. The protein operates within amino-acid biosynthesis; L-tryptophan biosynthesis; L-tryptophan from chorismate: step 5/5. Functionally, the beta subunit is responsible for the synthesis of L-tryptophan from indole and L-serine. This chain is Tryptophan synthase beta chain, found in Pseudomonas syringae pv. syringae (strain B728a).